Consider the following 707-residue polypeptide: Choline transporter-like protein 4 (707 aa).

The Cytoplasmic segment spans residues 1–33 (MGGKQDQDKEAYGKPAKYDPSFRGPIRNRSCTD). The helical transmembrane segment at 34–54 (IICCVLFFLFILGYIAVGILA) threads the bilayer. The Extracellular portion of the chain corresponds to 55–227 (WVYGDPKQVL…KIFEDFAQSW (173 aa)). N-linked (GlcNAc...) asparagine glycosylation is found at Asn-68, Asn-185, and Asn-196. Residues 228–248 (YWILIALGLALVLSLLFILLL) traverse the membrane as a helical segment. Residues 249–250 (RL) are Cytoplasmic-facing. A helical transmembrane segment spans residues 251–271 (VAGPLVFVLIIGVLGVLAYGI). The Extracellular segment spans residues 272–307 (YHCWEEYRVLRDKGASISQLGFTTNLSAYRNVQETW). N-linked (GlcNAc...) asparagine glycosylation is present at Asn-296. Residues 308–328 (LAALIILAVLEGVLLLMLIFL) traverse the membrane as a helical segment. The Cytoplasmic segment spans residues 329–356 (RQRICIAIALLKEASRAVGYIMSTMFYP). The helical transmembrane segment at 357–377 (LVTFALLLVCIAYWAIIALFL) threads the bilayer. Over 378 to 452 (ATSGQPQYVF…AVLGLFWTIN (75 aa)) the chain is Extracellular. N-linked (GlcNAc...) asparagine glycans are attached at residues Asn-391, Asn-403, and Asn-413. The chain crosses the membrane as a helical span at residues 453–473 (WVLALGQCVLAGAFASFYWAF). The Cytoplasmic portion of the chain corresponds to 474 to 498 (HKPRDIPTFPLGSAFLRTLRYHTGS). A helical membrane pass occupies residues 499–519 (LAFGALILTLVQIARVILEYI). At 520–557 (DHKLRGAQNPLTRCILCCFKCCLWCLEKFIKFLNRNAY) the chain is on the extracellular side. A helical transmembrane segment spans residues 558–578 (IMIAIYGKNFCVSAKNAFMLL). The Cytoplasmic portion of the chain corresponds to 579–594 (MRNIVRVVVLDKVTDL). A helical transmembrane segment spans residues 595–615 (LLFFGKLLVVGGVGVLSFFFF). Residues 616–635 (TGRIPSLGKTFENPQLNYYW) are Extracellular-facing. A helical transmembrane segment spans residues 636–656 (LPIMVSILGAYLIASGFFSVF). Residues 657–707 (GMCVDTLFLCFLEDLERNDGSADRPYYMSKSLLKILGKKNKGTPGDKKRKK) are Cytoplasmic-facing.

This sequence belongs to the CTL (choline transporter-like) family. Post-translationally, N-glycosylated; N-glycosylation of Asn-68 and Asn-391 is required for a proper thiamine pyrophosphate uptake.

Its subcellular location is the membrane. The protein localises to the apical cell membrane. The enzyme catalyses choline(out) + n H(+)(in) = choline(in) + n H(+)(out). It catalyses the reaction thiamine diphosphate(out) = thiamine diphosphate(in). Functionally, choline transporter that plays a role in the choline-acetylcholine system and is required to the efferent innervation of hair cells in the olivocochlear bundle for the maintenance of physiological function of outer hair cells and the protection of hair cells from acoustic injury. Also described as a thiamine pyrophosphate transporter in colon, may mediate the absorption of microbiota-generated thiamine pyrophosphate and contribute to host thiamine (vitamin B1) homeostasis. This is Choline transporter-like protein 4 from Bos taurus (Bovine).